The sequence spans 227 residues: Transcriptional regulatory protein CpxR homolog (227 aa).

The Response regulatory domain maps to K3–L115. D51 carries the 4-aspartylphosphate modification. The ompR/PhoB-type DNA-binding region spans V128–T227.

Post-translationally, phosphorylated.

The protein resides in the cytoplasm. In terms of biological role, member of a two-component regulatory system. The polypeptide is Transcriptional regulatory protein CpxR homolog (cpxR) (Haemophilus influenzae (strain ATCC 51907 / DSM 11121 / KW20 / Rd)).